A 431-amino-acid chain; its full sequence is Leucine carboxyl methyltransferase 1 (431 aa).

Residues Arg-103, Gly-131, Asp-159, and 219 to 220 contribute to the S-adenosyl-L-methionine site; that span reads DL. Positions 228–268 are disordered; sequence QPQQPLPPGVPIGSRGLHASPFTPGSTTQHEEQTEETSLPQ. Position 289 (Glu-289) interacts with S-adenosyl-L-methionine.

Belongs to the methyltransferase superfamily. LCMT family.

The enzyme catalyses [phosphatase 2A protein]-C-terminal L-leucine + S-adenosyl-L-methionine = [phosphatase 2A protein]-C-terminal L-leucine methyl ester + S-adenosyl-L-homocysteine. Its function is as follows. Methylates the carboxyl group of the C-terminal leucine residue of protein phosphatase 2A catalytic subunits to form alpha-leucine ester residues. This chain is Leucine carboxyl methyltransferase 1 (ppm-1), found in Neurospora crassa (strain ATCC 24698 / 74-OR23-1A / CBS 708.71 / DSM 1257 / FGSC 987).